Here is a 287-residue protein sequence, read N- to C-terminus: Bifunctional protein FolD 1 (287 aa).

NADP(+) contacts are provided by residues 170 to 172 (GRS) and Ser195.

Belongs to the tetrahydrofolate dehydrogenase/cyclohydrolase family. Homodimer.

The enzyme catalyses (6R)-5,10-methylene-5,6,7,8-tetrahydrofolate + NADP(+) = (6R)-5,10-methenyltetrahydrofolate + NADPH. It catalyses the reaction (6R)-5,10-methenyltetrahydrofolate + H2O = (6R)-10-formyltetrahydrofolate + H(+). It functions in the pathway one-carbon metabolism; tetrahydrofolate interconversion. Catalyzes the oxidation of 5,10-methylenetetrahydrofolate to 5,10-methenyltetrahydrofolate and then the hydrolysis of 5,10-methenyltetrahydrofolate to 10-formyltetrahydrofolate. The protein is Bifunctional protein FolD 1 of Streptomyces avermitilis (strain ATCC 31267 / DSM 46492 / JCM 5070 / NBRC 14893 / NCIMB 12804 / NRRL 8165 / MA-4680).